A 447-amino-acid polypeptide reads, in one-letter code: Putative branched-chain amino acid carrier protein SH1502 (447 aa).

Transmembrane regions (helical) follow at residues 6-26 (WIVGFTLFAMFFGAGNLIFPP), 40-60 (VIAFCLTGIGLPLLGVIVGAL), 74-94 (PKFSVIFLIIIYLTIGPLFAI), 116-136 (LVLFIFTLIYFLVVLYLCINP), 143-163 (IGSLLTPLLLITILAMIIKGF), 193-213 (GYLTMDAIAAIAFSMIVVNAI), 229-249 (VMSGLIAAIALVFIYVSLGFI), 270-287 (VGAYLLTTMAANSFGVFG), 290-310 (LLGIIVALACLTTACGLIVSV), 328-348 (IFFTLISFILANLGLNAVISM), 350-370 (VPVLSVIYPIAITVVLLILLA), 382-402 (IPIAVISIVSILSVISTNGWV), and 417-437 (LEWFPIAVVATIIGYVVAKFV).

The protein belongs to the branched chain amino acid transporter family.

It is found in the cell membrane. Component of the transport system for branched-chain amino acids (leucine, isoleucine and valine), which is coupled to a proton motive force. In Staphylococcus haemolyticus (strain JCSC1435), this protein is Putative branched-chain amino acid carrier protein SH1502.